The primary structure comprises 475 residues: Protein transport protein Sec61 subunit alpha (475 aa).

Helical transmembrane passes span 33 to 53, 76 to 96, 118 to 138, 145 to 165, 173 to 193, 241 to 261, 289 to 309, 354 to 374, 420 to 440, and 441 to 461; these read LWTA…LFGI, LMEL…LLAG, LFGM…GMYG, AGIC…VLLL, YGLG…TIVW, NLMN…FQGF, IPII…QMLA, FLDP…CAFF, AAFG…IGAI, and GSGT…EIFV.

It belongs to the SecY/SEC61-alpha family. In terms of assembly, the SEC61 channel-forming translocon complex consists of channel-forming core components SEC61A1, SEC61B and SEC61G and different auxiliary components such as SEC62 and SEC63. The SEC61 channel associates with the multi-pass translocon (MPT) complex. Expressed predominantly in epidermal cells of the embryo.

The protein resides in the endoplasmic reticulum membrane. Its function is as follows. Component of SEC61 channel-forming translocon complex that mediates transport of signal peptide-containing precursor polypeptides across the endoplasmic reticulum (ER). Forms a ribosome receptor and a gated pore in the ER membrane, both functions required for cotranslational translocation of nascent polypeptides. May cooperate with auxiliary protein SEC62, SEC63 and HSPA5/BiP to enable post-translational transport of small presecretory proteins. The SEC61 channel is also involved in ER membrane insertion of transmembrane proteins: it mediates membrane insertion of the first few transmembrane segments of proteins, while insertion of subsequent transmembrane regions of multi-pass membrane proteins is mediated by the multi-pass translocon (MPT) complex. This chain is Protein transport protein Sec61 subunit alpha, found in Halocynthia roretzi (Sea squirt).